The primary structure comprises 562 residues: Sulfite reductase [NADPH] hemoprotein beta-component (562 aa).

Residues cysteine 426, cysteine 432, cysteine 471, and cysteine 475 each contribute to the [4Fe-4S] cluster site. Residue cysteine 475 coordinates siroheme.

This sequence belongs to the nitrite and sulfite reductase 4Fe-4S domain family. Alpha(8)-beta(8). The alpha component is a flavoprotein, the beta component is a hemoprotein. Siroheme serves as cofactor. It depends on [4Fe-4S] cluster as a cofactor.

The enzyme catalyses hydrogen sulfide + 3 NADP(+) + 3 H2O = sulfite + 3 NADPH + 4 H(+). It participates in sulfur metabolism; hydrogen sulfide biosynthesis; hydrogen sulfide from sulfite (NADPH route): step 1/1. In terms of biological role, component of the sulfite reductase complex that catalyzes the 6-electron reduction of sulfite to sulfide. This is one of several activities required for the biosynthesis of L-cysteine from sulfate. This chain is Sulfite reductase [NADPH] hemoprotein beta-component, found in Shewanella denitrificans (strain OS217 / ATCC BAA-1090 / DSM 15013).